Here is a 77-residue protein sequence, read N- to C-terminus: Sec-independent protein translocase protein TatA 2 (77 aa).

A helical transmembrane segment spans residues 2 to 22 (FPGGISMTELIIILAVILLLF). A disordered region spans residues 52–77 (KEVKAEDVKTEERKEEKKEEKEKVEA).

It belongs to the TatA/E family. Forms a complex with TatC.

The protein localises to the cell inner membrane. Its function is as follows. Part of the twin-arginine translocation (Tat) system that transports large folded proteins containing a characteristic twin-arginine motif in their signal peptide across membranes. TatA could form the protein-conducting channel of the Tat system. The protein is Sec-independent protein translocase protein TatA 2 of Aquifex aeolicus (strain VF5).